The following is a 133-amino-acid chain: Hydrogenase maturation factor HypA (133 aa).

Residue His-2 coordinates Ni(2+). Cys-73, Cys-75, Cys-105, and Cys-108 together coordinate Zn(2+).

It belongs to the HypA/HybF family.

Functionally, involved in the maturation of [NiFe] hydrogenases. Required for nickel insertion into the metal center of the hydrogenase. The sequence is that of Hydrogenase maturation factor HypA from Methanosarcina acetivorans (strain ATCC 35395 / DSM 2834 / JCM 12185 / C2A).